Here is a 92-residue protein sequence, read N- to C-terminus: Small ribosomal subunit protein uS19 (92 aa).

It belongs to the universal ribosomal protein uS19 family.

Protein S19 forms a complex with S13 that binds strongly to the 16S ribosomal RNA. The chain is Small ribosomal subunit protein uS19 from Geobacillus kaustophilus (strain HTA426).